The following is a 149-amino-acid chain: Immunoglobulin kappa chain variable 6-17 (149 aa).

A signal peptide spans 1–29; that stretch reads MHHTSMGIKMESQIQVFVFVFLWLSGVDG. Repeats lie at residues 26–35 and 38–47; these read GVDGDIVMTQ. The tract at residues 42-64 is framework-1; it reads DIVMTQSHKFMSTSVGDRVSITC. Residues 65 to 75 form a complementarity-determining-1 region; that stretch reads KASQDVSTTVA. The interval 76 to 90 is framework-2; the sequence is WYQQKPGQSPKLLIY. The interval 91 to 97 is complementarity-determining-2; sequence SASYRYT. The framework-3 stretch occupies residues 98-129; it reads GVPDRFTGSGSGTDFTFTISSVQAEDLAVYYC. Positions 130–138 are complementarity-determining-3; that stretch reads QQHYSTPPT. Residues 139–148 are framework-4; that stretch reads FGGGTKLEIK.

This Mus musculus (Mouse) protein is Immunoglobulin kappa chain variable 6-17.